Here is a 242-residue protein sequence, read N- to C-terminus: Ribonuclease 3 (242 aa).

The RNase III domain maps to 12–139 (ANELLEALGT…LIGATFLEHG (128 aa)). Mg(2+) is bound at residue Glu-51. Residue Asp-55 is part of the active site. Mg(2+) is bound by residues Asp-125 and Glu-128. Glu-128 is an active-site residue. The 72-residue stretch at 165-236 (LDWKTSLTVK…AEAGWKSLDS (72 aa)) folds into the DRBM domain.

It belongs to the ribonuclease III family. As to quaternary structure, homodimer. Mg(2+) serves as cofactor.

It localises to the cytoplasm. It catalyses the reaction Endonucleolytic cleavage to 5'-phosphomonoester.. Functionally, digests double-stranded RNA. Involved in the processing of primary rRNA transcript to yield the immediate precursors to the large and small rRNAs (23S and 16S). Processes some mRNAs, and tRNAs when they are encoded in the rRNA operon. Processes pre-crRNA and tracrRNA of type II CRISPR loci if present in the organism. The sequence is that of Ribonuclease 3 from Bifidobacterium longum (strain NCC 2705).